A 282-amino-acid polypeptide reads, in one-letter code: MTNLTQLEMIIEKAFDDRDSIKTTTKGEIRESVEHALNLLDKGEIRVAERQKNGQWHVHQWLKKAVLLFFRLNPMQIIAGGVNGTYWWDKVPSKFSNWQETDFKKANFRSVPGTIVRHSAYIAPNVILMPSFVNLGAFIDEGTMVDTWATVGSCAQIGKHVHLSGGVGLGGVLEPLQANPTIIEDHCFIGARSEVVEGCIIREGAVLGMGVFIGKSTKIIDRTTGEVFIGEVPAYSVVVPGSLPGKPLPNGEVGPNLYCAVIVKRVDQKTREKTSINDLLRD.

Substrate contacts are provided by Arg109 and Asp146.

Belongs to the transferase hexapeptide repeat family. In terms of assembly, homotrimer.

The protein resides in the cytoplasm. The enzyme catalyses (S)-2,3,4,5-tetrahydrodipicolinate + succinyl-CoA + H2O = (S)-2-succinylamino-6-oxoheptanedioate + CoA. Its pathway is amino-acid biosynthesis; L-lysine biosynthesis via DAP pathway; LL-2,6-diaminopimelate from (S)-tetrahydrodipicolinate (succinylase route): step 1/3. This is 2,3,4,5-tetrahydropyridine-2,6-dicarboxylate N-succinyltransferase from Bartonella quintana (strain Toulouse) (Rochalimaea quintana).